The following is a 249-amino-acid chain: Serine 3-dehydrogenase (249 aa).

Residue leucine 6 to isoleucine 30 coordinates NADP(+). A substrate-binding site is contributed by serine 135. Tyrosine 148 serves as the catalytic Proton acceptor.

Belongs to the short-chain dehydrogenases/reductases (SDR) family. As to quaternary structure, homotetramer.

The catalysed reaction is L-serine + NADP(+) = aminoacetaldehyde + CO2 + NADPH. Functionally, catalyzes the oxidation of the hydroxyl group of serine to form 2-aminomalonate semialdehyde which is spontaneously converted into 2-aminoacetaldehyde and CO(2). Also acts on D-serine, L-glycerate, D-glycerate and 2-methyl-DL-serine. Does not act on O-methyl-DL-serine and L-threonine. This chain is Serine 3-dehydrogenase (sdh), found in Agrobacterium fabrum (strain C58 / ATCC 33970) (Agrobacterium tumefaciens (strain C58)).